Reading from the N-terminus, the 497-residue chain is Replication factor C large subunit (497 aa).

Residue 50 to 57 (GPAGVGKT) participates in ATP binding. Residues 428–455 (KRRSLGRDEGKAFFEKKPKKQTPDKKQM) are compositionally biased toward basic and acidic residues. The interval 428-497 (KRRSLGRDEG…AKPQKTLFDF (70 aa)) is disordered. Polar residues predominate over residues 456 to 465 (DLTQIINSTP). The span at 466–476 (QEDKVEKKETE) shows a compositional bias: basic and acidic residues.

The protein belongs to the activator 1 small subunits family. RfcL subfamily. In terms of assembly, heteromultimer composed of small subunits (RfcS) and large subunits (RfcL).

Functionally, part of the RFC clamp loader complex which loads the PCNA sliding clamp onto DNA. The protein is Replication factor C large subunit of Methanococcoides burtonii (strain DSM 6242 / NBRC 107633 / OCM 468 / ACE-M).